Here is a 131-residue protein sequence, read N- to C-terminus: Gem-associated protein 7 (131 aa).

N-acetylmethionine is present on Met-1. The SUZ-C domain maps to 1–29; that stretch reads MQTPVNIPVPVLRLPRGPDGFSRGFAPDG. Thr-3 is subject to Phosphothreonine. The Sm domain occupies 65-131; that stretch reads RYLRSLLAMV…SDIISYTFKP (67 aa).

It belongs to the gemin-7 family. Part of the core SMN complex that contains SMN1, GEMIN2/SIP1, DDX20/GEMIN3, GEMIN4, GEMIN5, GEMIN6, GEMIN7, GEMIN8 and STRAP/UNRIP. Part of the SMN-Sm complex that contains SMN1, GEMIN2/SIP1, DDX20/GEMIN3, GEMIN4, GEMIN5, GEMIN6, GEMIN7, GEMIN8, STRAP/UNRIP and the Sm proteins SNRPB, SNRPD1, SNRPD2, SNRPD3, SNRPE, SNRPF and SNRPG. Interacts with GEMIN6; the interaction is direct. Interacts with STRAP/UNRIP; the interaction is direct. Interacts with GEMIN8; the interaction is direct. Interacts with SNRPB, SNRPD2, SNRPD3 and SNRPE; the interaction is direct.

Its subcellular location is the nucleus. It is found in the nucleoplasm. The protein localises to the gem. The protein resides in the cytoplasm. The SMN complex catalyzes the assembly of small nuclear ribonucleoproteins (snRNPs), the building blocks of the spliceosome, and thereby plays an important role in the splicing of cellular pre-mRNAs. Most spliceosomal snRNPs contain a common set of Sm proteins SNRPB, SNRPD1, SNRPD2, SNRPD3, SNRPE, SNRPF and SNRPG that assemble in a heptameric protein ring on the Sm site of the small nuclear RNA to form the core snRNP (Sm core). In the cytosol, the Sm proteins SNRPD1, SNRPD2, SNRPE, SNRPF and SNRPG are trapped in an inactive 6S pICln-Sm complex by the chaperone CLNS1A that controls the assembly of the core snRNP. To assemble core snRNPs, the SMN complex accepts the trapped 5Sm proteins from CLNS1A forming an intermediate. Binding of snRNA inside 5Sm triggers eviction of the SMN complex, thereby allowing binding of SNRPD3 and SNRPB to complete assembly of the core snRNP. The protein is Gem-associated protein 7 (GEMIN7) of Homo sapiens (Human).